The sequence spans 434 residues: Trigger factor (434 aa).

A PPIase FKBP-type domain is found at 161 to 246 (EDRATLDFTG…LKKVEVRELP (86 aa)).

This sequence belongs to the FKBP-type PPIase family. Tig subfamily.

It is found in the cytoplasm. It catalyses the reaction [protein]-peptidylproline (omega=180) = [protein]-peptidylproline (omega=0). Its function is as follows. Involved in protein export. Acts as a chaperone by maintaining the newly synthesized protein in an open conformation. Functions as a peptidyl-prolyl cis-trans isomerase. The polypeptide is Trigger factor (Yersinia enterocolitica serotype O:8 / biotype 1B (strain NCTC 13174 / 8081)).